Reading from the N-terminus, the 36-residue chain is Photosystem I reaction center subunit VIII (36 aa).

Residues 8–28 (SVLVPLVGLIFPAMAMASLFL) form a helical membrane-spanning segment.

Belongs to the PsaI family.

The protein localises to the plastid. Its subcellular location is the chloroplast thylakoid membrane. May help in the organization of the PsaL subunit. This chain is Photosystem I reaction center subunit VIII, found in Daucus carota (Wild carrot).